A 421-amino-acid chain; its full sequence is MMENIMKKRLLSTSISTLLLGLSVMPAFADEDVTAWRLFIADHDKPVVNVIDALDGDKLATFNVKGPANLSRSESGATIFAIQGSAGVVSTIASGIAFHDHGDHADIDIDAPKLLPLELTGKKPGHFVERQGKIAQWFDGEDSAQILGESAVLKGQKNITKVNVVAPHHGVAVPYDNYAVVSIPNPDDASKRPVGARVVDLQGKKVGDDALCPGLHGSAGSGDTFALSCETGLLLITQKNAAPVIRHLPYAKTLPEGSTSTLIGGKGMQYFIGNYGPDRIILVDPTESDSFRLIQLPTRRVHFVVDPVRAKFAYVFTEDGKLNQIDVLKGEISQSVRVTDPYSMDGHWNDPRPRIAVADNKIYVTDPLKSKIIVLDATSFKKTSEISVEGQPFNIVAVGGSGKVHGEHHDHEAHHHDDHAH.

An N-terminal signal peptide occupies residues 1 to 29 (MMENIMKKRLLSTSISTLLLGLSVMPAFA). Zn(2+)-binding residues include H101, H104, D106, H126, H169, H216, and H405. A disulfide bond links C212 and C229. The interval 399–421 (GGSGKVHGEHHDHEAHHHDDHAH) is disordered. A compositionally biased stretch (basic and acidic residues) spans 404 to 421 (VHGEHHDHEAHHHDDHAH). Residues 408-419 (HHDHEAHHHDDH) carry the N-terminal Zn(2+)-binding motif; binds a third Zn(2+) with low affinity motif.

In terms of assembly, monomer.

The protein resides in the periplasm. In terms of biological role, acts as a zinc chaperone in the AztABCD zinc transport system. Directly transfers one zinc cation to the solute binding protein AztC; the transfer occurs without the formation of a stable interaction. Binds 3 Zn(2+), two with high affinity and one with low affinity, and transfers only Zn(2+) bound to site 2 to AztC. The chain is Zinc chaperone AztD from Citrobacter koseri (strain ATCC BAA-895 / CDC 4225-83 / SGSC4696).